We begin with the raw amino-acid sequence, 367 residues long: UDP-N-acetylglucosamine--N-acetylmuramyl-(pentapeptide) pyrophosphoryl-undecaprenol N-acetylglucosamine transferase (367 aa).

Residues 15-17 (TGG), N127, R163, S191, I249, and Q294 contribute to the UDP-N-acetyl-alpha-D-glucosamine site.

The protein belongs to the glycosyltransferase 28 family. MurG subfamily.

It is found in the cell inner membrane. It carries out the reaction di-trans,octa-cis-undecaprenyl diphospho-N-acetyl-alpha-D-muramoyl-L-alanyl-D-glutamyl-meso-2,6-diaminopimeloyl-D-alanyl-D-alanine + UDP-N-acetyl-alpha-D-glucosamine = di-trans,octa-cis-undecaprenyl diphospho-[N-acetyl-alpha-D-glucosaminyl-(1-&gt;4)]-N-acetyl-alpha-D-muramoyl-L-alanyl-D-glutamyl-meso-2,6-diaminopimeloyl-D-alanyl-D-alanine + UDP + H(+). The protein operates within cell wall biogenesis; peptidoglycan biosynthesis. Its function is as follows. Cell wall formation. Catalyzes the transfer of a GlcNAc subunit on undecaprenyl-pyrophosphoryl-MurNAc-pentapeptide (lipid intermediate I) to form undecaprenyl-pyrophosphoryl-MurNAc-(pentapeptide)GlcNAc (lipid intermediate II). The sequence is that of UDP-N-acetylglucosamine--N-acetylmuramyl-(pentapeptide) pyrophosphoryl-undecaprenol N-acetylglucosamine transferase from Burkholderia ambifaria (strain MC40-6).